Here is a 330-residue protein sequence, read N- to C-terminus: Mitochondrial glycine transporter (330 aa).

Solcar repeat units lie at residues Ser11–Asn94, Leu122–Arg206, and Thr234–Arg318. 6 helical membrane-spanning segments follow: residues Phe17 to Gln42, Gly69 to Val95, Leu128 to Glu153, Gly181 to Lys204, Ile238 to Ile264, and Gly293 to Ile311.

The protein belongs to the mitochondrial carrier (TC 2.A.29) family. SLC25A38 subfamily.

The protein resides in the mitochondrion inner membrane. The catalysed reaction is glycine(in) = glycine(out). In terms of biological role, mitochondrial glycine transporter that imports glycine into the mitochondrial matrix. Plays an important role in providing glycine for the first enzymatic step in heme biosynthesis, the condensation of glycine with succinyl-CoA to produce 5-aminolevulinate (ALA) in the mitochondrial matrix. This chain is Mitochondrial glycine transporter, found in Sclerotinia sclerotiorum (strain ATCC 18683 / 1980 / Ss-1) (White mold).